A 435-amino-acid chain; its full sequence is Ribulose bisphosphate carboxylase/oxygenase activase 2, chloroplastic (435 aa).

The N-terminal 56 residues, 1 to 56 (MAAAYSTVGAVNRAPLSLNGSGARASLVPSTAFFGSSLKKSAAKFPKASSGNFKIV), are a transit peptide targeting the chloroplast. An ATP-binding site is contributed by 165 to 172 (GGKGQGKS).

Belongs to the RuBisCO activase family.

It localises to the plastid. The protein localises to the chloroplast stroma. Its function is as follows. Activation of RuBisCO (ribulose-1,5-bisphosphate carboxylase/oxygenase; EC 4.1.1.39) involves the ATP-dependent carboxylation of the epsilon-amino group of lysine leading to a carbamate structure. This chain is Ribulose bisphosphate carboxylase/oxygenase activase 2, chloroplastic (RCA2), found in Larrea tridentata (Creosote bush).